A 548-amino-acid polypeptide reads, in one-letter code: 5-epi-aristolochene synthase 1 (548 aa).

Mg(2+) contacts are provided by aspartate 301, aspartate 305, aspartate 444, threonine 448, and glutamate 452. The DDXXD motif motif lies at 301–305; sequence DDTFD.

Belongs to the terpene synthase family. Monomer. It depends on Mg(2+) as a cofactor. Expressed in roots, but not in shoots.

The protein resides in the cytoplasm. It catalyses the reaction (2E,6E)-farnesyl diphosphate = (+)-5-epi-aristolochene + diphosphate. It functions in the pathway secondary metabolite biosynthesis; terpenoid biosynthesis. Its function is as follows. Catalyzes the cyclization of trans,trans-farnesyl diphosphate (FPP) to the bicyclic intermediate 5-epi-aristolochene, initial step in the conversion of FPP to the sesquiterpenoid antifungal phytoalexin capsidiol. Produces germacrene A as an enzyme-bound intermediate that is not released by the enzyme, but is further cyclized to produce the bicyclic 5-epi-aristolochene. This is 5-epi-aristolochene synthase 1 (EAS) from Nicotiana attenuata (Coyote tobacco).